The sequence spans 419 residues: Protein transport protein sec9 (419 aa).

Positions 1–11 (MKKLFKKKKGV) are enriched in basic residues. 3 disordered regions span residues 1–60 (MKKL…TYGS), 116–143 (ARKDMPPMKSSAAVTERPSMHRSAPSQD), and 156–186 (ARIQNDDESTTDTIPHNDDGTEGDEYGEGYR). Positions 21-32 (ESNSNTATNAPS) are enriched in polar residues. Over residues 36-60 (GGTTANSYSSNSYNDNNNSNSTYGS) the composition is skewed to low complexity. The residue at position 141 (S141) is a Phosphoserine. T-SNARE coiled-coil homology domains follow at residues 203–265 (QFVK…AREL) and 356–418 (DAME…LRHI).

The protein belongs to the SNAP-25 family.

Functionally, has a role in cell separation, a final step of cytokinesis and in the assembly of the forespore membrane. May have a role in the transport of secretory proteins to these growing sites. In Schizosaccharomyces pombe (strain 972 / ATCC 24843) (Fission yeast), this protein is Protein transport protein sec9 (sec9).